The following is a 345-amino-acid chain: MLMFDPVPVKQEAMDPVSVSYPSNYMESMKPNKYGVIYSTPLPEKFFQTPEGLSHGIQMEPVDLTVNKRSSPPSAGNSPSSLKFPSSHRRASPGLSMPSSSPPIKKYSPPSPGVQPFGVPLSMPPVMAAALSRHGIRSPGILPVIQPVVVQPVPFMYTSHLQQPLMVSLSEEMENSSSSMQVPVIESYEKPISQKKIKIEPGIEPQRTDYYPEEMSPPLMNSVSPPQALLQENHPSVIVQPGKRPLPVESPDTQRKRRIHRCDYDGCNKVYTKSSHLKAHRRTHTGEKPYKCTWEGCTWKFARSDELTRHFRKHTGIKPFQCPDCDRSFSRSDHLALHRKRHMLV.

The interval 1–74 is repressor domain; sequence MLMFDPVPVK…TVNKRSSPPS (74 aa). A Glycyl lysine isopeptide (Lys-Gly) (interchain with G-Cter in SUMO) cross-link involves residue Lys10. The short motif at 60 to 68 is the 9aaTAD; inactive element; it reads EPVDLTVNK. The short motif at 61–65 is the CTBP-binding motif element; that stretch reads PVDLT. The disordered stretch occupies residues 66 to 112; it reads VNKRSSPPSAGNSPSSLKFPSSHRRASPGLSMPSSSPPIKKYSPPSP. Residue Lys68 forms a Glycyl lysine isopeptide (Lys-Gly) (interchain with G-Cter in SUMO2) linkage. 2 stretches are compositionally biased toward low complexity: residues 70–81 and 92–108; these read SSPPSAGNSPSS and SPGLSMPSSSPPIKKYS. 5 positions are modified to phosphoserine: Ser71, Ser92, Ser101, Ser108, and Ser111. Glycyl lysine isopeptide (Lys-Gly) (interchain with G-Cter in SUMO2) cross-links involve residues Lys196 and Lys198. A phosphoserine mark is found at Ser216, Ser224, and Ser250. 3 C2H2-type zinc fingers span residues 260-284, 290-314, and 320-342; these read HRCDYDGCNKVYTKSSHLKAHRRTH, YKCTWEGCTWKFARSDELTRHFRKH, and FQCPDCDRSFSRSDHLALHRKRH.

The protein belongs to the krueppel C2H2-type zinc-finger protein family. In terms of assembly, monomer. Post-translationally, sumoylated with SUMO1. Sumoylation is enhanced by PIAS1, PIAS2alpha and PIAS2beta, and PIAS4, but not by Pc2. Enhances transcriptional repression, but has no effect on DNA binding. Sumoylation on Lys-198 is the major site.

Its subcellular location is the nucleus. In terms of biological role, binds to the CACCC box of erythroid cell-expressed genes. May play a role in hematopoiesis. The protein is Krueppel-like factor 3 (KLF3) of Homo sapiens (Human).